The chain runs to 397 residues: 2-aminoadipate transaminase (397 aa).

G40 is a substrate binding site. Pyridoxal 5'-phosphate is bound by residues Y70, 100 to 101 (SQ), N174, 202 to 205 (DDAY), 235 to 237 (SFS), and R245. Substrate is bound at residue N174. K263 bears the N6-(pyridoxal phosphate)lysine mark. R368 is a substrate binding site.

Belongs to the class-I pyridoxal-phosphate-dependent aminotransferase family. As to quaternary structure, homodimer. Requires pyridoxal 5'-phosphate as cofactor.

The catalysed reaction is L-2-aminoadipate + 2-oxoglutarate = 2-oxoadipate + L-glutamate. Its pathway is amino-acid biosynthesis; L-lysine biosynthesis via AAA pathway; L-alpha-aminoadipate from 2-oxoglutarate: step 5/5. Catalyzes the transfer of an amino group between 2-oxoadipate (2-OA) and glutamate (Glu) to yield alpha-aminodipate (AAA). It can also transaminate glutamate, leucine, and aromatic amino acids. It also contributes in the biosynthesis of other amino acids such as leucine. This is 2-aminoadipate transaminase (lysN) from Thermus thermophilus (strain ATCC BAA-163 / DSM 7039 / HB27).